Consider the following 343-residue polypeptide: Aspartate carbamoyltransferase catalytic subunit (343 aa).

2 residues coordinate carbamoyl phosphate: Arg54 and Thr55. An L-aspartate-binding site is contributed by Lys82. 3 residues coordinate carbamoyl phosphate: Arg104, His134, and Gln137. Positions 177 and 232 each coordinate L-aspartate. Residues Gly277 and Pro278 each coordinate carbamoyl phosphate. A disordered region spans residues 323–343 (PDQSNPQRNVTNTSNWQETKR).

Belongs to the aspartate/ornithine carbamoyltransferase superfamily. ATCase family. In terms of assembly, heterododecamer (2C3:3R2) of six catalytic PyrB chains organized as two trimers (C3), and six regulatory PyrI chains organized as three dimers (R2).

It carries out the reaction carbamoyl phosphate + L-aspartate = N-carbamoyl-L-aspartate + phosphate + H(+). It functions in the pathway pyrimidine metabolism; UMP biosynthesis via de novo pathway; (S)-dihydroorotate from bicarbonate: step 2/3. Catalyzes the condensation of carbamoyl phosphate and aspartate to form carbamoyl aspartate and inorganic phosphate, the committed step in the de novo pyrimidine nucleotide biosynthesis pathway. The polypeptide is Aspartate carbamoyltransferase catalytic subunit (Renibacterium salmoninarum (strain ATCC 33209 / DSM 20767 / JCM 11484 / NBRC 15589 / NCIMB 2235)).